The chain runs to 57 residues: Small ribosomal subunit protein eS31 (57 aa).

The Zn(2+) site is built by Cys-29, Cys-32, Cys-47, and Cys-50. A C4-type zinc finger spans residues 29–50 (CPRCGPGVFMANHKDRWSCGRC).

The protein belongs to the eukaryotic ribosomal protein eS31 family. In terms of assembly, part of the 30S ribosomal subunit. Requires Zn(2+) as cofactor.

The polypeptide is Small ribosomal subunit protein eS31 (Thermococcus kodakarensis (strain ATCC BAA-918 / JCM 12380 / KOD1) (Pyrococcus kodakaraensis (strain KOD1))).